We begin with the raw amino-acid sequence, 30 residues long: U5-ctenitoxin-Pk1b (30 aa).

Cystine bridges form between Cys6-Cys23 and Cys13-Cys29.

This sequence belongs to the neurotoxin 04 (omega-agtx) family. 02 (Tx1) subfamily. Expressed by the venom gland.

The protein resides in the secreted. Lethal neurotoxin. Causes spastic paralysis and death in mice in 4-6 minutes after intracerebroventricular injection at dose levels of 1.5 ug per mouse. The sequence is that of U5-ctenitoxin-Pk1b from Phoneutria keyserlingi (Brazilian wandering spider).